The primary structure comprises 403 residues: Ubiquitin-like modifier-activating enzyme 5 (403 aa).

ATP-binding residues include Gly81, Asp102, Lys125, Asn148, and Asn182. Residues Cys224 and Cys227 each contribute to the Zn(2+) site. Residue Cys248 is the Glycyl thioester intermediate of the active site. Zn(2+) contacts are provided by Cys301 and Cys306. The UFM1-interacting sequence (UIS) signature appears at 333-345 (VVHEDNEWGIELV). Positions 346-376 (SEVSEEELKNSSGPVPTLPEGITVAYTVPKK) are linker. Phosphoserine is present on residues Ser357 and Ser392. Positions 388-403 (DSGESLEDLMARMKNM) match the UFC1-binding sequence (UFC) motif.

Belongs to the ubiquitin-activating E1 family. UBA5 subfamily. In terms of assembly, homodimer; homodimerization is required for UFM1 activation. Interacts (via UIS motif) with UFM1; binds UFM1 via a trans-binding mechanism in which UFM1 interacts with distinct sites in both subunits of the UBA5 homodimer. Interacts (via C-terminus) with UFC1. Interacts (via UIS motif) with GABARAPL2 and, with lower affinity, with GABARAP and GABARAPL1.

Its subcellular location is the cytoplasm. It is found in the nucleus. It localises to the endoplasmic reticulum membrane. The protein localises to the golgi apparatus. In terms of biological role, E1-like enzyme which specifically catalyzes the first step in ufmylation. Activates UFM1 by first adenylating its C-terminal glycine residue with ATP, and thereafter linking this residue to the side chain of a cysteine residue in E1, yielding a UFM1-E1 thioester and free AMP. Activates UFM1 via a trans-binding mechanism, in which UFM1 interacts with distinct sites in both subunits of the UBA5 homodimer. Trans-binding also promotes stabilization of the UBA5 homodimer, and enhances ATP-binding. Transfer of UFM1 from UBA5 to the E2-like enzyme UFC1 also takes place using a trans mechanism. Ufmylation plays a key role in various processes, such as ribosome recycling, response to DNA damage, interferon response or reticulophagy (also called ER-phagy). Ufmylation is essential for erythroid differentiation of both megakaryocytes and erythrocytes. In Mus musculus (Mouse), this protein is Ubiquitin-like modifier-activating enzyme 5.